The chain runs to 106 residues: ATP-dependent Clp protease adapter protein ClpS (106 aa).

The protein belongs to the ClpS family. Binds to the N-terminal domain of the chaperone ClpA.

Its function is as follows. Involved in the modulation of the specificity of the ClpAP-mediated ATP-dependent protein degradation. The chain is ATP-dependent Clp protease adapter protein ClpS from Pseudoalteromonas atlantica (strain T6c / ATCC BAA-1087).